A 74-amino-acid chain; its full sequence is ATP synthase subunit c (74 aa).

Helical transmembrane passes span 9–29 (IGAG…GNIF) and 54–74 (FALT…ILFV).

The protein belongs to the ATPase C chain family. As to quaternary structure, F-type ATPases have 2 components, F(1) - the catalytic core - and F(0) - the membrane proton channel. F(1) has five subunits: alpha(3), beta(3), gamma(1), delta(1), epsilon(1). F(0) has three main subunits: a(1), b(2) and c(10-14). The alpha and beta chains form an alternating ring which encloses part of the gamma chain. F(1) is attached to F(0) by a central stalk formed by the gamma and epsilon chains, while a peripheral stalk is formed by the delta and b chains.

It localises to the cell inner membrane. Its function is as follows. F(1)F(0) ATP synthase produces ATP from ADP in the presence of a proton or sodium gradient. F-type ATPases consist of two structural domains, F(1) containing the extramembraneous catalytic core and F(0) containing the membrane proton channel, linked together by a central stalk and a peripheral stalk. During catalysis, ATP synthesis in the catalytic domain of F(1) is coupled via a rotary mechanism of the central stalk subunits to proton translocation. Functionally, key component of the F(0) channel; it plays a direct role in translocation across the membrane. A homomeric c-ring of between 10-14 subunits forms the central stalk rotor element with the F(1) delta and epsilon subunits. The polypeptide is ATP synthase subunit c (Gluconacetobacter diazotrophicus (strain ATCC 49037 / DSM 5601 / CCUG 37298 / CIP 103539 / LMG 7603 / PAl5)).